Consider the following 377-residue polypeptide: O-phospho-L-seryl-tRNA:Cys-tRNA synthase (377 aa).

Pyridoxal 5'-phosphate contacts are provided by residues 83–84 (AR), Asn-188, and 211–213 (SGH). Lys-214 carries the N6-(pyridoxal phosphate)lysine modification.

Belongs to the SepCysS family. In terms of assembly, homodimer. Interacts with SepRS. Requires pyridoxal 5'-phosphate as cofactor.

It catalyses the reaction O-phospho-L-seryl-tRNA(Cys) + hydrogen sulfide + H(+) = L-cysteinyl-tRNA(Cys) + phosphate. In terms of biological role, converts O-phospho-L-seryl-tRNA(Cys) (Sep-tRNA(Cys)) to L-cysteinyl-tRNA(Cys) (Cys-tRNA(Cys)). This Methanothermobacter thermautotrophicus (strain ATCC 29096 / DSM 1053 / JCM 10044 / NBRC 100330 / Delta H) (Methanobacterium thermoautotrophicum) protein is O-phospho-L-seryl-tRNA:Cys-tRNA synthase.